We begin with the raw amino-acid sequence, 199 residues long: NAD(P)H dehydrogenase (quinone) (199 aa).

Positions 4–190 (MLVLYYSAYG…DGARFQGRRV (187 aa)) constitute a Flavodoxin-like domain. FMN-binding positions include 10 to 15 (SAYGYM) and 78 to 80 (TRY). Tyr-12 provides a ligand contact to NAD(+). Trp-98 contacts substrate. FMN is bound by residues 113 to 119 (STATQHG) and His-134. Positions 158–181 (GAPYGMTTTADGDGSRQPSAQELD) are disordered. Over residues 163-177 (MTTTADGDGSRQPSA) the composition is skewed to polar residues.

It belongs to the WrbA family. It depends on FMN as a cofactor.

It carries out the reaction a quinone + NADH + H(+) = a quinol + NAD(+). The enzyme catalyses a quinone + NADPH + H(+) = a quinol + NADP(+). This Brucella abortus (strain S19) protein is NAD(P)H dehydrogenase (quinone).